Consider the following 183-residue polypeptide: Ribosome maturation factor RimM (183 aa).

The region spanning 104–183 (EGDYYWKDLM…TIEVDWDPGF (80 aa)) is the PRC barrel domain.

It belongs to the RimM family. Binds ribosomal protein uS19.

Its subcellular location is the cytoplasm. In terms of biological role, an accessory protein needed during the final step in the assembly of 30S ribosomal subunit, possibly for assembly of the head region. Essential for efficient processing of 16S rRNA. May be needed both before and after RbfA during the maturation of 16S rRNA. It has affinity for free ribosomal 30S subunits but not for 70S ribosomes. The polypeptide is Ribosome maturation factor RimM (Salmonella arizonae (strain ATCC BAA-731 / CDC346-86 / RSK2980)).